A 282-amino-acid chain; its full sequence is B3 domain-containing protein At5g06250 (282 aa).

The segment at residues 46–159 is a DNA-binding region (TF-B3); sequence FEKSLTPSDV…RLFIGWRRRG (114 aa).

It localises to the nucleus. The protein is B3 domain-containing protein At5g06250 of Arabidopsis thaliana (Mouse-ear cress).